We begin with the raw amino-acid sequence, 366 residues long: Alanine racemase (366 aa).

The Proton acceptor; specific for D-alanine role is filled by lysine 33. Lysine 33 carries the N6-(pyridoxal phosphate)lysine modification. Arginine 129 is a substrate binding site. The active-site Proton acceptor; specific for L-alanine is the tyrosine 253. Substrate is bound at residue methionine 301.

Belongs to the alanine racemase family. The cofactor is pyridoxal 5'-phosphate.

The enzyme catalyses L-alanine = D-alanine. Its pathway is amino-acid biosynthesis; D-alanine biosynthesis; D-alanine from L-alanine: step 1/1. Catalyzes the interconversion of L-alanine and D-alanine. May also act on other amino acids. This chain is Alanine racemase (alr), found in Xanthomonas axonopodis pv. citri (strain 306).